The sequence spans 346 residues: Small glutamine-rich tetratricopeptide repeat-containing protein 2 (346 aa).

TPR repeat units lie at residues 102–135 (AEDL…LPTN), 136–169 (AIYY…DPSY), 170–203 (FRGY…EGDN), and 205–229 (TEAM…EKTV). The interval 219 to 249 (VEQSLNLEKTVPEQSRDADVDASQGASAGGL) is disordered. Over residues 228–237 (TVPEQSRDAD) the composition is skewed to basic and acidic residues. Position 308 is a phosphothreonine (threonine 308). The tract at residues 325–346 (GNLFGGAGAQSTDETPDNENKQ) is disordered.

Belongs to the SGT family. In terms of assembly, interacts with HSC82, HSP104, MDY2, SSA1 and SSA2.

It localises to the cytoplasm. In terms of biological role, co-chaperone that binds to the molecular chaperone Hsp70 (SSA1 and SSA2). Regulates Hsp70 ATPase activity. Required for recovery from heat shock. The protein is Small glutamine-rich tetratricopeptide repeat-containing protein 2 (SGT2) of Saccharomyces cerevisiae (strain ATCC 204508 / S288c) (Baker's yeast).